Here is a 197-residue protein sequence, read N- to C-terminus: Putative peptidyl-prolyl cis-trans isomerase (197 aa).

The 182-residue stretch at 14–195 folds into the PPIase cyclophilin-type domain; the sequence is GEIKVVMHTN…HDVVIESIDV (182 aa).

Belongs to the cyclophilin-type PPIase family.

The enzyme catalyses [protein]-peptidylproline (omega=180) = [protein]-peptidylproline (omega=0). In terms of biological role, PPIases accelerate the folding of proteins. It catalyzes the cis-trans isomerization of proline imidic peptide bonds in oligopeptides. The protein is Putative peptidyl-prolyl cis-trans isomerase of Staphylococcus aureus (strain COL).